A 405-amino-acid chain; its full sequence is Accessory Sec system protein translocase subunit SecY2 (405 aa).

The next 10 helical transmembrane spans lie at 14–34, 65–85, 104–124, 131–151, 156–176, 190–210, 243–263, 285–305, 343–363, and 368–388; these read MCTLFLLFIYVLGSRIALPFV, LFSIGLSPWMSAMILWQMFSF, MYLTLGIALIQALALTTNLPV, FLVFLLNTSLLVAGTFFLVWL, ATIGVGGPVVILLASMVASLP, LGLLFLLLVLGVLFTYLVVLF, GMPYMYVMSLMGLPSYLLLLL, PLWIYAYILILFVFSIAFAFV, FALIGAVFNVTLAGVPILFVL, and LLKVSMIPGLFLILSGMLFTI.

It belongs to the SecY/SEC61-alpha family. SecY2 subfamily. In terms of assembly, component of the accessory SecA2/SecY2 protein translocase complex required to export cell wall proteins. May form heterotrimers with SecE and SecG subunits.

The protein localises to the cell membrane. Its function is as follows. Part of the accessory SecA2/SecY2 system specifically required for export of possible cell wall proteins. The central subunit of a protein translocation channel. The chain is Accessory Sec system protein translocase subunit SecY2 from Streptococcus oralis (strain Uo5).